The chain runs to 159 residues: Ribosomal RNA large subunit methyltransferase H (159 aa).

Residues Leu-76, Gly-108, and 127 to 132 (FGRMTY) contribute to the S-adenosyl-L-methionine site.

It belongs to the RNA methyltransferase RlmH family. As to quaternary structure, homodimer.

Its subcellular location is the cytoplasm. It catalyses the reaction pseudouridine(1915) in 23S rRNA + S-adenosyl-L-methionine = N(3)-methylpseudouridine(1915) in 23S rRNA + S-adenosyl-L-homocysteine + H(+). Its function is as follows. Specifically methylates the pseudouridine at position 1915 (m3Psi1915) in 23S rRNA. The polypeptide is Ribosomal RNA large subunit methyltransferase H (Carboxydothermus hydrogenoformans (strain ATCC BAA-161 / DSM 6008 / Z-2901)).